A 310-amino-acid chain; its full sequence is Alpha/beta hydrolase domain-containing protein 17A (310 aa).

Residues 38–61 (VPEPEPGPGGAGAAPSGPLRTSAA) form a disordered region. Residues Ser-190, Asp-255, and His-284 each act as charge relay system in the active site. The residue at position 307 (Ser-307) is a Phosphoserine.

This sequence belongs to the AB hydrolase superfamily. ABHD17 family. Post-translationally, palmitoylated on cysteine residues located in a cysteine cluster at the N-terminus which promotes membrane localization. Palmitoylation is required for post-synaptic localization and for depalmitoylating activity towards DLG4/PSD95.

The protein resides in the cell membrane. It is found in the endosome membrane. Its subcellular location is the cell projection. It localises to the dendritic spine. The protein localises to the postsynaptic density membrane. It catalyses the reaction S-hexadecanoyl-L-cysteinyl-[protein] + H2O = L-cysteinyl-[protein] + hexadecanoate + H(+). Hydrolyzes fatty acids from S-acylated cysteine residues in proteins. Has depalmitoylating activity towards NRAS. Has depalmitoylating activity towards DLG4/PSD95. May have depalmitoylating activity towars MAP6. This is Alpha/beta hydrolase domain-containing protein 17A from Mus musculus (Mouse).